The chain runs to 229 residues: MAKKKAFSPIFHLSFIVFLPWGIYLSFKKCLGSWITNWWNTSESEIFLNIIQEKSILENFIELEEFLFVEEIFKNNSETHPQEFHTGIHKEAIQFIKIQNESYIHMILRLSTNLICVVIISGFYIWRNETLVILNSWSREFLYNLSDTVKVFSILLLTDLCIGFHSPHGWELMIGSIYKDFGFVQNDRIISGLVSTFPVILDTIFKYWIFRYLNRVSPSLVVIYHSMND.

Transmembrane regions (helical) follow at residues 7-27 (FSPIFHLSFIVFLPWGIYLSF), 106-126 (MILRLSTNLICVVIISGFYIW), and 189-209 (IISGLVSTFPVILDTIFKYWI).

This sequence belongs to the CemA family.

The protein resides in the plastid membrane. The catalysed reaction is K(+)(in) + H(+)(out) = K(+)(out) + H(+)(in). Its function is as follows. May be involved in proton extrusion. The polypeptide is Potassium/proton antiporter CemA (Cuscuta reflexa (Southern Asian dodder)).